We begin with the raw amino-acid sequence, 739 residues long: MKMKKQCATLTFFIGLHGYTIAEDNPKNISLSVITVPGHHERQPDRSIITQNEIDQKQSDNVADLVNTVPGVSMAGGFRPSGQTLNIRGMGDTEDIRVQVDGATKNFEKYQQGSLFIEPELLRRVSIDKGNHYPQYGNGGFAGTIKLETKNAKDFLQENQLLGGLLKYGYNTNNNQRTFSGAIFMQNDQKNIDALVYATVRRAHDYKRADKTPIKYSANNQANFLAKVNWWLTPSQLLAFSKVHGNHNGWEPFAAKRDLLPGPTEAEITKYGLDLAWKRKLVAREQQDRSYSLQYQFLPENNPWINTVAQLSHSSTYQHDTRSEQASKTYLASLGNESWTRYTDLTFDVNNTSLFNVAKTSHTLLVGLQWVKHKRQTLIFDPSKLQKAEYNHGYFQPSYMPSGHQYTHAFYAQDKIKIHNLTVSIGARYDYVKNIGKPNIATIYNDPTAGHDYSSKHYPGWSSYLGLNYKLTPYLNLFSNISNTWRAPVIDEQYETQYAKATLSPTASSLDLKKERITQLRVGKQIHFDHILSNNDQLSFNSTFFYYKGKDEIFKTRGVRCFESAQNNNNEVCSKKIGNYRNLPGYQIKGFELEANYDSTYWFTNLSYSHTIGKRLASPRNPWLASTSWIAEIPPRKAVVTLGSHIPDTNLTLGWKSEFVRRQDRSPTDQDKDAGHWALPKSSGYALHGIFATWQPKQIKHLRIQFTVDNLLNRSYRPYLSELAAGTGRNIKLSISKQF.

An N-terminal signal peptide occupies residues 1-22 (MKMKKQCATLTFFIGLHGYTIA). The 113-residue stretch at 38–150 (GHHERQPDRS…FAGTIKLETK (113 aa)) folds into the TBDR plug domain. In terms of domain architecture, TBDR beta-barrel spans 161-739 (LLGGLLKYGY…NIKLSISKQF (579 aa)).

This sequence belongs to the TonB-dependent receptor family.

Its subcellular location is the cell outer membrane. Functionally, heme receptor. The polypeptide is TonB-dependent heme receptor A (tdhA) (Haemophilus ducreyi (strain 35000HP / ATCC 700724)).